The sequence spans 306 residues: Putative NylC-analogous protein (306 aa).

The protein belongs to the peptidase S58 family.

The chain is Putative NylC-analogous protein from Agromyces sp. (strain KY5R).